A 98-amino-acid chain; its full sequence is Integration host factor subunit alpha (98 aa).

The tract at residues 49-71 (FGNFDLRDKNQRPGRNPKTGEDI) is disordered.

It belongs to the bacterial histone-like protein family. As to quaternary structure, heterodimer of an alpha and a beta chain.

Functionally, this protein is one of the two subunits of integration host factor, a specific DNA-binding protein that functions in genetic recombination as well as in transcriptional and translational control. The polypeptide is Integration host factor subunit alpha (Shewanella amazonensis (strain ATCC BAA-1098 / SB2B)).